A 231-amino-acid polypeptide reads, in one-letter code: MSVTLALPSKGRLKEKTLAVLEKAGYKVVLPDDDRNYRARVEGEDDLDILFLSASEIARKLGYGSVDLGVTGEDLVRETLAHADERVAIEAQLGFGHADVVVAVPEVWRDVTTMADLDDVAADFRQRHGRRLRIATKYWRLTQQFFSQKHGIQVYRIVESLGATEGAPAAGSADMIVDITSTGSTLRANRLKVLEDGIILRSQACLVSARRSHTSRRVEEIAARIRAGLEI.

The protein belongs to the ATP phosphoribosyltransferase family. Short subfamily. As to quaternary structure, heteromultimer composed of HisG and HisZ subunits.

The protein localises to the cytoplasm. It carries out the reaction 1-(5-phospho-beta-D-ribosyl)-ATP + diphosphate = 5-phospho-alpha-D-ribose 1-diphosphate + ATP. The protein operates within amino-acid biosynthesis; L-histidine biosynthesis; L-histidine from 5-phospho-alpha-D-ribose 1-diphosphate: step 1/9. Functionally, catalyzes the condensation of ATP and 5-phosphoribose 1-diphosphate to form N'-(5'-phosphoribosyl)-ATP (PR-ATP). Has a crucial role in the pathway because the rate of histidine biosynthesis seems to be controlled primarily by regulation of HisG enzymatic activity. The polypeptide is ATP phosphoribosyltransferase (Brucella melitensis biotype 2 (strain ATCC 23457)).